Reading from the N-terminus, the 610-residue chain is Elongation factor 4 (610 aa).

The tr-type G domain occupies 13–195; sequence SHIRNFSIVA…AIVNRLPAPK (183 aa). GTP is bound by residues 25–30 and 142–145; these read DHGKST and NKID.

This sequence belongs to the TRAFAC class translation factor GTPase superfamily. Classic translation factor GTPase family. LepA subfamily.

Its subcellular location is the cell inner membrane. The catalysed reaction is GTP + H2O = GDP + phosphate + H(+). Required for accurate and efficient protein synthesis under certain stress conditions. May act as a fidelity factor of the translation reaction, by catalyzing a one-codon backward translocation of tRNAs on improperly translocated ribosomes. Back-translocation proceeds from a post-translocation (POST) complex to a pre-translocation (PRE) complex, thus giving elongation factor G a second chance to translocate the tRNAs correctly. Binds to ribosomes in a GTP-dependent manner. In Rhizobium leguminosarum bv. trifolii (strain WSM2304), this protein is Elongation factor 4.